Consider the following 119-residue polypeptide: Large ribosomal subunit protein bL20 (119 aa).

The protein belongs to the bacterial ribosomal protein bL20 family.

Binds directly to 23S ribosomal RNA and is necessary for the in vitro assembly process of the 50S ribosomal subunit. It is not involved in the protein synthesizing functions of that subunit. The polypeptide is Large ribosomal subunit protein bL20 (Alcanivorax borkumensis (strain ATCC 700651 / DSM 11573 / NCIMB 13689 / SK2)).